A 297-amino-acid chain; its full sequence is Diaminopimelate epimerase (297 aa).

Substrate is bound by residues asparagine 13, glutamine 46, and asparagine 66. The active-site Proton donor is cysteine 76. Residues 77 to 78 (GN), asparagine 174, asparagine 207, and 225 to 226 (ER) each bind substrate. The active-site Proton acceptor is cysteine 234. 235–236 (GT) lines the substrate pocket.

This sequence belongs to the diaminopimelate epimerase family. As to quaternary structure, homodimer.

The protein resides in the cytoplasm. The catalysed reaction is (2S,6S)-2,6-diaminopimelate = meso-2,6-diaminopimelate. Its pathway is amino-acid biosynthesis; L-lysine biosynthesis via DAP pathway; DL-2,6-diaminopimelate from LL-2,6-diaminopimelate: step 1/1. In terms of biological role, catalyzes the stereoinversion of LL-2,6-diaminopimelate (L,L-DAP) to meso-diaminopimelate (meso-DAP), a precursor of L-lysine and an essential component of the bacterial peptidoglycan. The chain is Diaminopimelate epimerase from Leptothrix cholodnii (strain ATCC 51168 / LMG 8142 / SP-6) (Leptothrix discophora (strain SP-6)).